Consider the following 469-residue polypeptide: Putative dipeptidase MW1694 (469 aa).

A Zn(2+)-binding site is contributed by H84. Residue D86 is part of the active site. Position 115 (D115) interacts with Zn(2+). E149 functions as the Proton acceptor in the catalytic mechanism. 3 residues coordinate Zn(2+): E150, D173, and H440.

The protein belongs to the peptidase M20A family. Zn(2+) is required as a cofactor.

This is Putative dipeptidase MW1694 from Staphylococcus aureus (strain MW2).